Here is a 286-residue protein sequence, read N- to C-terminus: Bifunctional protein FolD (286 aa).

NADP(+) is bound by residues 160-162, Ser189, and Thr230; that span reads GRS.

This sequence belongs to the tetrahydrofolate dehydrogenase/cyclohydrolase family. In terms of assembly, homodimer.

The enzyme catalyses (6R)-5,10-methylene-5,6,7,8-tetrahydrofolate + NADP(+) = (6R)-5,10-methenyltetrahydrofolate + NADPH. The catalysed reaction is (6R)-5,10-methenyltetrahydrofolate + H2O = (6R)-10-formyltetrahydrofolate + H(+). It functions in the pathway one-carbon metabolism; tetrahydrofolate interconversion. Catalyzes the oxidation of 5,10-methylenetetrahydrofolate to 5,10-methenyltetrahydrofolate and then the hydrolysis of 5,10-methenyltetrahydrofolate to 10-formyltetrahydrofolate. In Chlamydia pneumoniae (Chlamydophila pneumoniae), this protein is Bifunctional protein FolD.